Consider the following 154-residue polypeptide: MAYAVVRVRGSVGVRGNIADTMKMLRLHRVNHCVVIPDNEHYTGMIKKVKDYVTYGEIDKDTLVALILKRGRLPGNKRLTEELVKELTELPVEELAEKIIAGEIKIKDTPIKPVFRLHPPRKGYDRAGVKKGFSIGGALGYRSGKINDLLNKMM.

The protein belongs to the universal ribosomal protein uL30 family. As to quaternary structure, part of the 50S ribosomal subunit.

This is Large ribosomal subunit protein uL30 from Methanococcus maripaludis (strain C5 / ATCC BAA-1333).